A 72-amino-acid polypeptide reads, in one-letter code: Small, acid-soluble spore protein C (72 aa).

The protein belongs to the alpha/beta-type SASP family.

SASP are bound to spore DNA. They are double-stranded DNA-binding proteins that cause DNA to change to an a-like conformation. They protect the DNA backbone from chemical and enzymatic cleavage and are thus involved in dormant spore's high resistance to UV light. The protein is Small, acid-soluble spore protein C (sasP-C) of Priestia megaterium (Bacillus megaterium).